The primary structure comprises 198 residues: Thymidine kinase (198 aa).

ATP is bound by residues 9–16 (GTMNSGKS) and 85–88 (DEAQ). Glu-86 acts as the Proton acceptor in catalysis. Residues Cys-143, Cys-146, Cys-180, and His-183 each contribute to the Zn(2+) site.

It belongs to the thymidine kinase family. In terms of assembly, homotetramer.

The protein resides in the cytoplasm. It carries out the reaction thymidine + ATP = dTMP + ADP + H(+). The polypeptide is Thymidine kinase (Streptococcus thermophilus (strain ATCC BAA-250 / LMG 18311)).